The following is a 341-amino-acid chain: Cell wall mannoprotein PIR1 (341 aa).

Positions 1–18 are cleaved as a signal peptide; the sequence is MQYKKSLVASALVATSLA. Residues 19–63 constitute a propeptide that is removed on maturation; the sequence is AYAPKDPWSTLTPSATYKGGITDYSSTFGIAVEPIATTASSKAKR. PIR1/2/3 repeat units follow at residues 64 to 82, 83 to 101, 102 to 125, 126 to 144, 145 to 163, 164 to 182, 183 to 201, and 202 to 220; these read AAAISQIGDGQIQATTKTT, AAAVSQIGDGQIQATTKTK, AAAVSQIGDGQIQATTKTTSAKTT, AAAVSQIGDGQIQATTKTT, AAAVSQIGDGQIQATTNTT, and VAPVSQITDGQIQATTLTS.

This sequence belongs to the PIR protein family. Covalently linked to beta-1,3-glucan of the inner cell wall layer via an alkali-sensitive ester linkage between the gamma-carboxyl group of glutamic acids, arising from specific glutamines within the PIR1/2/3 repeats, and hydroxyl groups of glucoses of beta-1,3-glucan chains. Post-translationally, O-glycosylated. Extensively O-mannosylated.

It localises to the secreted. It is found in the cell wall. Its function is as follows. Component of the outer cell wall layer. Required for stability of the cell wall and for optimal growth. Required for resistance against several antifungal and cell wall-perturbing agents and for tolerance to heat shock. This Saccharomyces cerevisiae (strain ATCC 204508 / S288c) (Baker's yeast) protein is Cell wall mannoprotein PIR1 (PIR1).